A 545-amino-acid chain; its full sequence is Chaperonin GroEL 2 (545 aa).

ATP-binding positions include 29-32, 86-90, G414, and D499; these read TLGP and DGTTT.

The protein belongs to the chaperonin (HSP60) family. In terms of assembly, forms a cylinder of 14 subunits composed of two heptameric rings stacked back-to-back. Interacts with the co-chaperonin GroES.

The protein resides in the cytoplasm. The enzyme catalyses ATP + H2O + a folded polypeptide = ADP + phosphate + an unfolded polypeptide.. Its function is as follows. Together with its co-chaperonin GroES, plays an essential role in assisting protein folding. The GroEL-GroES system forms a nano-cage that allows encapsulation of the non-native substrate proteins and provides a physical environment optimized to promote and accelerate protein folding. This chain is Chaperonin GroEL 2, found in Chloroflexus aurantiacus (strain ATCC 29366 / DSM 635 / J-10-fl).